Here is a 105-residue protein sequence, read N- to C-terminus: Multidrug resistance protein EbrA (105 aa).

Transmembrane regions (helical) follow at residues 2-22 (LVGYIFLTIAICSESIGAAML), 35-55 (ALVVIAYSLAFYMLSLTLNHI), 57-77 (LSLSYATWSGVGTVLTAVIGV), and 84-104 (LNAKGLIGILLLISGVVLLNW).

Belongs to the drug/metabolite transporter (DMT) superfamily. Small multidrug resistance (SMR) (TC 2.A.7.1) family. EbrA/EbrB subfamily. As to quaternary structure, the efflux pump is composed of EbrA and EbrB.

It localises to the cell membrane. In terms of biological role, part of a multidrug efflux pump. Confers resistance to cationic lipophilic dyes such as ethidium bromide, acriflavine, pyronine Y and safranin O. The efflux is probably coupled to an influx of protons. This is Multidrug resistance protein EbrA (ebrA) from Bacillus atrophaeus.